A 425-amino-acid polypeptide reads, in one-letter code: Serine--tRNA ligase (425 aa).

Position 230–232 (230–232 (TAE)) interacts with L-serine. 261–263 (RSE) is an ATP binding site. Position 284 (glutamate 284) interacts with L-serine. ATP is bound at residue 348–351 (EISS). Position 384 (serine 384) interacts with L-serine.

Belongs to the class-II aminoacyl-tRNA synthetase family. Type-1 seryl-tRNA synthetase subfamily. As to quaternary structure, homodimer. The tRNA molecule binds across the dimer.

It localises to the cytoplasm. The enzyme catalyses tRNA(Ser) + L-serine + ATP = L-seryl-tRNA(Ser) + AMP + diphosphate + H(+). It carries out the reaction tRNA(Sec) + L-serine + ATP = L-seryl-tRNA(Sec) + AMP + diphosphate + H(+). Its pathway is aminoacyl-tRNA biosynthesis; selenocysteinyl-tRNA(Sec) biosynthesis; L-seryl-tRNA(Sec) from L-serine and tRNA(Sec): step 1/1. Functionally, catalyzes the attachment of serine to tRNA(Ser). Is also able to aminoacylate tRNA(Sec) with serine, to form the misacylated tRNA L-seryl-tRNA(Sec), which will be further converted into selenocysteinyl-tRNA(Sec). This is Serine--tRNA ligase from Streptococcus pyogenes serotype M6 (strain ATCC BAA-946 / MGAS10394).